We begin with the raw amino-acid sequence, 485 residues long: Trk system potassium uptake protein TrkG (485 aa).

The Cytoplasmic portion of the chain corresponds to 1–5 (MNTSH). The helical transmembrane segment at 6–32 (VRVVTHMCGFLVWLYSLSMLPPMVVAL) threads the bilayer. Residues 33 to 38 (FYKEKS) lie on the Periplasmic side of the membrane. Residues 39 to 60 (LFVFFITFVIFFCIGGGAWYTT) form a helical membrane-spanning segment. The Cytoplasmic portion of the chain corresponds to 61–68 (KKSGIQLR). The helical transmembrane segment at 69-93 (TRDGFIIIVMFWILFSVISAFPLWI) threads the bilayer. The segment at residues 101–112 (FIDALFEGVSGI) is an intramembrane region (helical; Pore-forming). The stretch at 113 to 118 (TTTGAT) is an intramembrane region. Residues 113–118 (TTTGAT) form a selectivity filter part 1 region. K(+) is bound by residues Thr-114 and Thr-115. Over 119–127 (VIDDVSSLP) the chain is Periplasmic. Residues 128-153 (RAYLYYRSQLNFIGGLGVIVLAVAVL) traverse the membrane as a helical segment. The Cytoplasmic portion of the chain corresponds to 154 to 180 (PLLGIGGAKLYQSEMPGPFKDDKLTPR). Residues 181–205 (LADTSRTLWITYSLLGIACIVCYRL) form a helical membrane-spanning segment. At 206-208 (AGM) the chain is on the periplasmic side. Residue Pro-209 is an intramembrane region. The helical; Pore-forming intramembrane region spans 210-221 (LFDAICHGISTV). Residues 222 to 227 (SLGGFS) lie within the membrane without spanning it. Residues 222–227 (SLGGFS) form a selectivity filter part 2 region. K(+)-binding residues include Leu-223 and Gly-224. Residues 228-237 (THSESIGYFN) are Periplasmic-facing. The helical intramembrane region spans 238–253 (NYLVELVAGSFSLLSA). The helical transmembrane segment at 277 to 297 (LRFFLLIALGVIIVTSFQVWH) threads the bilayer. Positions 303-318 (LHGSFIHSFFLASSML) form an intramembrane region, helical; Pore-forming. The stretch at 319-324 (TDNGLA) is an intramembrane region. The selectivity filter part 3 stretch occupies residues 319–324 (TDNGLA). Residues Asp-320 and Asn-321 each coordinate K(+). Over 325–332 (TQDYASWP) the chain is Periplasmic. The helical intramembrane region spans 333-344 (THTIVFLLLSSF). Positions 345–357 (FGGCIGSTCGGIK) form an intramembrane region, note=Loop between two helices. Residues 392–419 (TDRVMRSVWSFFFLYTLFTVFFILVLNG) form a helical membrane-spanning segment. Residues 420–421 (MG) lie on the Periplasmic side of the membrane. Residues 422–423 (YD) lie within the membrane without spanning it. Positions 424–434 (FLTSFATVAAC) form an intramembrane region, helical; Pore-forming. The stretch at 435–441 (INNMGLG) is an intramembrane region. The tract at residues 436–441 (NNMGLG) is selectivity filter part 4. K(+) contacts are provided by Asn-437 and Met-438. Residues 442–453 (FGATASSFGVLN) lie on the Periplasmic side of the membrane. Positions 454 to 465 (DIAKCLMCIAMI) form an intramembrane region, helical.

This sequence belongs to the TrkH potassium transport family.

Its subcellular location is the cell inner membrane. In terms of biological role, low-affinity potassium transport system. Interacts with Trk system potassium uptake protein TrkA. Requires TrkE (sapD) for maximal transport activity, low activity is seen in its absence; no further stimulation is seen with SapF. Transport in the absence of SapD is dependent on a high membrane potential and a high cytoplasmic ATP concentration, suggesting this protein may be able to interact with other ATP-binding proteins. Can transport potassium and rubidium. This chain is Trk system potassium uptake protein TrkG (trkG), found in Escherichia coli (strain K12).